The primary structure comprises 555 residues: Urocanate hydratase (555 aa).

Residues Gly53–Gly54, Gln131, Gly177–Gly179, Glu197, Arg202, Asn243–Ala244, Gln264–His268, Tyr274–Leu275, and Tyr323 each bind NAD(+). Cys411 is a catalytic residue. Gly493 contributes to the NAD(+) binding site.

The protein belongs to the urocanase family. Requires NAD(+) as cofactor.

It is found in the cytoplasm. The enzyme catalyses 4-imidazolone-5-propanoate = trans-urocanate + H2O. Its pathway is amino-acid degradation; L-histidine degradation into L-glutamate; N-formimidoyl-L-glutamate from L-histidine: step 2/3. Catalyzes the conversion of urocanate to 4-imidazolone-5-propionate. The polypeptide is Urocanate hydratase (Maricaulis maris (strain MCS10) (Caulobacter maris)).